Consider the following 308-residue polypeptide: N-acetylmuramic acid 6-phosphate etherase (308 aa).

The SIS domain occupies 59–222; that stretch reads TAERLRHGGR…STGVMVKLGK (164 aa). Glu87 functions as the Proton donor in the catalytic mechanism. The active site involves Glu118.

It belongs to the GCKR-like family. MurNAc-6-P etherase subfamily. As to quaternary structure, homodimer.

It carries out the reaction N-acetyl-D-muramate 6-phosphate + H2O = N-acetyl-D-glucosamine 6-phosphate + (R)-lactate. It functions in the pathway amino-sugar metabolism; N-acetylmuramate degradation. Functionally, specifically catalyzes the cleavage of the D-lactyl ether substituent of MurNAc 6-phosphate, producing GlcNAc 6-phosphate and D-lactate. In Nostoc punctiforme (strain ATCC 29133 / PCC 73102), this protein is N-acetylmuramic acid 6-phosphate etherase.